The sequence spans 337 residues: Adenosine deaminase (337 aa).

The Zn(2+) site is built by His12 and His14. Substrate contacts are provided by His14, Asp16, and Gly170. His197 lines the Zn(2+) pocket. Glu200 (proton donor) is an active-site residue. Zn(2+) is bound at residue Asp278. Asp279 lines the substrate pocket.

The protein belongs to the metallo-dependent hydrolases superfamily. Adenosine and AMP deaminases family. Adenosine deaminase subfamily. It depends on Zn(2+) as a cofactor.

The enzyme catalyses adenosine + H2O + H(+) = inosine + NH4(+). It carries out the reaction 2'-deoxyadenosine + H2O + H(+) = 2'-deoxyinosine + NH4(+). In terms of biological role, catalyzes the hydrolytic deamination of adenosine and 2-deoxyadenosine. In Pectobacterium atrosepticum (strain SCRI 1043 / ATCC BAA-672) (Erwinia carotovora subsp. atroseptica), this protein is Adenosine deaminase.